The primary structure comprises 483 residues: Regulatory protein ViaA (483 aa).

This sequence belongs to the ViaA family. In terms of assembly, homodimer. Interacts with RavA.

It localises to the cytoplasm. In terms of biological role, component of the RavA-ViaA chaperone complex, which may act on the membrane to optimize the function of some of the respiratory chains. ViaA stimulates the ATPase activity of RavA. In Shigella flexneri serotype 5b (strain 8401), this protein is Regulatory protein ViaA.